The sequence spans 68 residues: Alpha-conotoxin-like Ca1.2 (68 aa).

The signal sequence occupies residues 1–21 (MGMRMMFTVFLLVVLATTVVS). The propeptide occupies 22–48 (FTSDRASEGRNAAAKDKASDLVALTVR). Cystine bridges form between Cys-50–Cys-56 and Cys-51–Cys-64. A lacks the Ser-Xaa-Pro motif that is crucial for potent interaction with nAChR region spans residues 52-54 (AIR). Position 63 is a sulfotyrosine (Tyr-63). Cys-64 is subject to Cysteine amide. A propeptide spanning residues 65 to 68 (GGIY) is cleaved from the precursor.

The protein belongs to the conotoxin A superfamily. As to expression, expressed by the venom duct.

It is found in the secreted. Its function is as follows. Alpha-conotoxins act on postsynaptic membranes, they bind to the nicotinic acetylcholine receptors (nAChR) and thus inhibit them. Has possibly a distinct nAChR binding mode from other alpha-conotoxins, due to a different three residue motif (lacks the Ser-Xaa-Pro motif). The chain is Alpha-conotoxin-like Ca1.2 from Conus caracteristicus (Characteristic cone).